Consider the following 366-residue polypeptide: Uroporphyrinogen decarboxylase (366 aa).

Substrate contacts are provided by residues 28–32 (RQAGR), D78, Y160, T215, and H333.

The protein belongs to the uroporphyrinogen decarboxylase family. Homodimer.

It is found in the cytoplasm. It catalyses the reaction uroporphyrinogen III + 4 H(+) = coproporphyrinogen III + 4 CO2. It functions in the pathway porphyrin-containing compound metabolism; protoporphyrin-IX biosynthesis; coproporphyrinogen-III from 5-aminolevulinate: step 4/4. Catalyzes the decarboxylation of four acetate groups of uroporphyrinogen-III to yield coproporphyrinogen-III. The chain is Uroporphyrinogen decarboxylase from Paraburkholderia xenovorans (strain LB400).